Here is a 100-residue protein sequence, read N- to C-terminus: Large ribosomal subunit protein uL23 (100 aa).

It belongs to the universal ribosomal protein uL23 family. Part of the 50S ribosomal subunit. Contacts protein L29, and trigger factor when it is bound to the ribosome.

One of the early assembly proteins it binds 23S rRNA. One of the proteins that surrounds the polypeptide exit tunnel on the outside of the ribosome. Forms the main docking site for trigger factor binding to the ribosome. This is Large ribosomal subunit protein uL23 from Baumannia cicadellinicola subsp. Homalodisca coagulata.